The sequence spans 367 residues: Protein valois (367 aa).

3 WD repeats span residues 101-139, 152-192, and 198-238; these read QAEH…RDSQ, AHPT…MVST, and SHTD…PSST. An interaction with csul region spans residues 309-367; that stretch reads LAAMSNLPASVKVANVQAGHEFIYTHQDTHSRLTDAVWTDDSTLITIGHGRKMVTHAIK.

As to quaternary structure, interacts with csul and tud. As to expression, in oocytes, localizes to pole plasm and nuage (at protein level). Expressed stronger in the germline than in somatic cells. In the germarium it sometimes concentrates in perinuclear aggregates that disappear by stage 2 of oogenesis. At later stages, it is uniformly distributed in the nurse cells and oocyte, as well as in young embryos, with no particular enrichment at the posterior or inside the pole cells (at protein level).

It is found in the cytoplasm. Involved in specific localization of cytoplasmic proteins during the formation of pole plasm. Required for synthesis and/or stability of oskar protein (osk) and localization of tudor (tud) in both the nuage and posterior pole of the oocyte. Required for normal posterior localization of osk in later stages of oogenesis and for posterior localization of the vasa (vas) protein during the entire process of pole plasm assembly. May act by regulating the complex that contains the arginine N-methyltransferase csul. This chain is Protein valois (vls), found in Drosophila melanogaster (Fruit fly).